A 205-amino-acid polypeptide reads, in one-letter code: Guanylate kinase (205 aa).

The Guanylate kinase-like domain maps to 6-184 (GLLLVVSGPS…SAKEIEGIIS (179 aa)). 13–20 (GPSGAGKG) is an ATP binding site.

Belongs to the guanylate kinase family.

The protein resides in the cytoplasm. It carries out the reaction GMP + ATP = GDP + ADP. Its function is as follows. Essential for recycling GMP and indirectly, cGMP. This chain is Guanylate kinase, found in Clostridioides difficile (strain 630) (Peptoclostridium difficile).